A 321-amino-acid polypeptide reads, in one-letter code: Phospholipid phosphatase-related protein type 5 (321 aa).

6 helical membrane-spanning segments follow: residues 6-26 (VALI…TVML), 62-82 (AVPP…VIIV), 122-142 (FLGI…AGQV), 196-213 (AALS…ITST), 225-245 (VLCL…VAEY), and 252-272 (VIAG…CVVN).

The protein belongs to the PA-phosphatase related phosphoesterase family.

It is found in the cell membrane. In terms of biological role, induces filopodia formation and promotes neurite growth in a CDC42-independent manner; impedes neurite growth inhibitory-mediated axonal retraction. In Mus musculus (Mouse), this protein is Phospholipid phosphatase-related protein type 5.